The primary structure comprises 170 residues: Protein BTG1 (170 aa).

It belongs to the BTG family.

Anti-proliferative protein. The protein is Protein BTG1 (BTG1) of Gallus gallus (Chicken).